The following is a 471-amino-acid chain: Chromosomal replication initiator protein DnaA (471 aa).

A domain I, interacts with DnaA modulators region spans residues 1-77 (MELNSSFWTL…YTEISDTYGK (77 aa)). Residues 77 to 130 (KPFEVEFSITGNKINSHIETSTTPDEVLSGSEILQAQLARAQNIQPTQPRSSSD) are domain II. Residues 131 to 349 (TLNSELTFST…GNLKKVKMFS (219 aa)) are domain III, AAA+ region. Positions 176, 178, 179, and 180 each coordinate ATP. The segment at 350–471 (ELQGLPIDHE…EQRIHNITRV (122 aa)) is domain IV, binds dsDNA.

The protein belongs to the DnaA family. As to quaternary structure, oligomerizes as a right-handed, spiral filament on DNA at oriC.

Its subcellular location is the cytoplasm. Its function is as follows. Plays an essential role in the initiation and regulation of chromosomal replication. ATP-DnaA binds to the origin of replication (oriC) to initiate formation of the DNA replication initiation complex once per cell cycle. Binds the DnaA box (a 9 base pair repeat at the origin) and separates the double-stranded (ds)DNA. Forms a right-handed helical filament on oriC DNA; dsDNA binds to the exterior of the filament while single-stranded (ss)DNA is stabiized in the filament's interior. The ATP-DnaA-oriC complex binds and stabilizes one strand of the AT-rich DNA unwinding element (DUE), permitting loading of DNA polymerase. After initiation quickly degrades to an ADP-DnaA complex that is not apt for DNA replication. Binds acidic phospholipids. The polypeptide is Chromosomal replication initiator protein DnaA (Bdellovibrio bacteriovorus (strain ATCC 15356 / DSM 50701 / NCIMB 9529 / HD100)).